The primary structure comprises 196 residues: SPRY domain-containing protein 7 (196 aa).

N-acetylalanine is present on alanine 2. The region spanning 2 to 184 is the B30.2/SPRY domain; that stretch reads ATSVLCCLRC…FSEFYHTPPP (183 aa).

The protein is SPRY domain-containing protein 7 (SPRYD7) of Homo sapiens (Human).